A 647-amino-acid chain; its full sequence is Versicolorin B synthase (647 aa).

The N-terminal stretch at 1–26 (MALSTILTAAAMPVAGLFAFAQQSSA) is a signal peptide. Residues 85-86 (TA) and 106-107 (EA) each bind FAD. A glycan (N-linked (GlcNAc...) asparagine) is linked at asparagine 117. 172 to 175 (GAML) is a binding site for FAD. Residues asparagine 222 and asparagine 509 are each glycosylated (N-linked (GlcNAc...) asparagine). FAD is bound by residues alanine 617 and 628-629 (PM).

The protein belongs to the GMC oxidoreductase family. In terms of assembly, homodimer. It depends on FAD as a cofactor.

It is found in the cytoplasm. It localises to the cytosol. It carries out the reaction (2S-3S)-versiconal hemiacetal = versicolorin B + H2O. It catalyses the reaction (S)-5'-oxoaverantin + H(+) = (1'S,5'S)-averufin + H2O. It functions in the pathway mycotoxin biosynthesis. Versicolorin B synthase; part of the fragmented gene cluster that mediates the biosynthesis of dothistromin (DOTH), a polyketide toxin very similar in structure to the aflatoxin precursor, versicolorin B. The first step of the pathway is the conversion of acetate to norsolorinic acid (NOR) and requires the fatty acid synthase subunits hexA and hexB, as well as the polyketide synthase pksA. PksA combines a hexanoyl starter unit and 7 malonyl-CoA extender units to synthesize the precursor NOR. The hexanoyl starter unit is provided to the acyl-carrier protein (ACP) domain by the fungal fatty acid synthase hexA/hexB. The second step is the conversion of NOR to averantin (AVN) and requires the norsolorinic acid ketoreductase nor1, which catalyzes the dehydration of norsolorinic acid to form (1'S)-averantin. The cytochrome P450 monooxygenase avnA then catalyzes the hydroxylation of AVN to 5'hydroxyaverantin (HAVN). The next step is performed by adhA that transforms HAVN to averufin (AVF). Averufin might then be converted to hydroxyversicolorone by cypX and avfA. Hydroxyversicolorone is further converted versiconal hemiacetal acetate (VHA) by moxY. VHA is then the substrate for the versiconal hemiacetal acetate esterase est1 to yield versiconal (VAL). Versicolorin B synthase vbsA then converts VAL to versicolorin B (VERB) by closing the bisfuran ring. Then, the activity of the versicolorin B desaturase verB leads to versicolorin A (VERA). DotB, a predicted chloroperoxidase, may perform epoxidation of the A-ring of VERA. Alternatively, a cytochrome P450, such as cypX or avnA could catalyze this step. It is also possible that another, uncharacterized, cytochrome P450 enzyme is responsible for this step. Opening of the epoxide could potentially be achieved by the epoxide hydrolase epoA. However, epoA seems not to be required for DOTH biosynthesis, but other epoxide hydrolases may have the ability to complement this hydrolysis. Alternatively, opening of the epoxide ring could be achieved non-enzymatically. The next step is the deoxygenation of ring A to yield the 5,8-dihydroxyanthraquinone which is most likely catalyzed by the NADPH dehydrogenase encoded by ver1. The last stages of DOTH biosynthesis are proposed to involve hydroxylation of the bisfuran. OrdB and norB might have oxidative roles here. An alternative possibility is that cytochrome P450 monoogenases such as avnA and cypX might perform these steps in addition to previously proposed steps. The protein is Versicolorin B synthase of Dothistroma septosporum (Red band needle blight fungus).